The primary structure comprises 176 residues: Sarcoplasmic calcium-binding protein (176 aa).

The residue at position 1 (T1) is an N-acetylthreonine. EF-hand domains lie at 3 to 38 (YLVS…FTDL), 55 to 90 (KWWD…AFLA), 91 to 126 (TMTA…FGHE), and 127 to 160 (NESV…SFVT). Residues D16, N18, D20, and N27 each contribute to the Ca(2+) site. D104, D106, D108, S110, and E115 together coordinate Ca(2+).

Functionally, like parvalbumins, SCPs seem to be more abundant in fast contracting muscles, but no functional relationship can be established from this distribution. This Mizuhopecten yessoensis (Japanese scallop) protein is Sarcoplasmic calcium-binding protein.